Reading from the N-terminus, the 208-residue chain is Imidazoleglycerol-phosphate dehydratase (208 aa).

This sequence belongs to the imidazoleglycerol-phosphate dehydratase family.

Its subcellular location is the cytoplasm. It carries out the reaction D-erythro-1-(imidazol-4-yl)glycerol 3-phosphate = 3-(imidazol-4-yl)-2-oxopropyl phosphate + H2O. Its pathway is amino-acid biosynthesis; L-histidine biosynthesis; L-histidine from 5-phospho-alpha-D-ribose 1-diphosphate: step 6/9. The sequence is that of Imidazoleglycerol-phosphate dehydratase from Prochlorococcus marinus (strain MIT 9211).